Consider the following 479-residue polypeptide: GTPase Der (479 aa).

2 EngA-type G domains span residues 3 to 167 and 191 to 366; these read FTLA…EAAA and LQIA…ATWN. Residues 9 to 16, 56 to 60, 119 to 122, 197 to 204, 244 to 248, and 309 to 312 each bind GTP; these read GRPNVGKS, DTAGL, NKAE, GRPNAGKS, DTAGM, and NKWD. Residues 367-453 form the KH-like domain; that stretch reads TRISTARLNQ…RLWMRSQADD (87 aa). The disordered stretch occupies residues 449-479; it reads SQADDNPYKNRKKSTPSRLNKHVRKGETKKG. Basic residues predominate over residues 457-472; that stretch reads KNRKKSTPSRLNKHVR.

This sequence belongs to the TRAFAC class TrmE-Era-EngA-EngB-Septin-like GTPase superfamily. EngA (Der) GTPase family. Associates with the 50S ribosomal subunit.

GTPase that plays an essential role in the late steps of ribosome biogenesis. The polypeptide is GTPase Der (Jannaschia sp. (strain CCS1)).